Reading from the N-terminus, the 245-residue chain is Thiopurine S-methyltransferase (245 aa).

Serine 14 is subject to Phosphoserine. S-adenosyl-L-methionine is bound at residue 29–40 (WQDKWVNGKTAF). Residue phenylalanine 40 coordinates substrate. Lysine 58 is modified (N6-acetyllysine). S-adenosyl-L-methionine is bound by residues leucine 69, glutamate 90, 134–135 (SI), and arginine 152.

The protein belongs to the class I-like SAM-binding methyltransferase superfamily. TPMT family. As to quaternary structure, monomer.

The protein localises to the cytoplasm. The catalysed reaction is S-adenosyl-L-methionine + a thiopurine = S-adenosyl-L-homocysteine + a thiopurine S-methylether.. It catalyses the reaction mercaptopurine + S-adenosyl-L-methionine = 6-methylthiopurine + S-adenosyl-L-homocysteine + H(+). The enzyme catalyses 6-thioguanine + S-adenosyl-L-methionine = 6-methylthioguanine + S-adenosyl-L-homocysteine + H(+). Its activity is regulated as follows. Inhibited by S-adenosyl-L-homocysteine (SAH). Its function is as follows. Catalyzes the S-methylation of thiopurine drugs such as 6-mercaptopurine (also called mercaptopurine, 6-MP or its brand name Purinethol) and 6-thioguanine (also called tioguanine or 6-TG) using S-adenosyl-L-methionine as the methyl donor. TPMT activity modulates the cytotoxic effects of thiopurine prodrugs. A natural substrate for this enzyme has yet to be identified. This chain is Thiopurine S-methyltransferase (TPMT), found in Homo sapiens (Human).